The following is a 277-amino-acid chain: MEMO1 family protein Tpet_0837 (277 aa).

This sequence belongs to the MEMO1 family.

This chain is MEMO1 family protein Tpet_0837, found in Thermotoga petrophila (strain ATCC BAA-488 / DSM 13995 / JCM 10881 / RKU-1).